The primary structure comprises 436 residues: GTPase Der (436 aa).

EngA-type G domains follow at residues 4-167 and 176-351; these read PVVA…PKEE and VKFS…DNHS. Residues 10–17, 57–61, 119–122, 182–189, 229–233, and 294–297 contribute to the GTP site; these read GRPNVGKS, DTGGI, NKVD, DTAGM, and NKWD. Positions 352–436 constitute a KH-like domain; it reads LRVQSSMLND…PIRVIARKRK (85 aa).

The protein belongs to the TRAFAC class TrmE-Era-EngA-EngB-Septin-like GTPase superfamily. EngA (Der) GTPase family. Associates with the 50S ribosomal subunit.

Its function is as follows. GTPase that plays an essential role in the late steps of ribosome biogenesis. In Listeria innocua serovar 6a (strain ATCC BAA-680 / CLIP 11262), this protein is GTPase Der.